The sequence spans 159 residues: uncharacterized protein (159 aa).

The protein belongs to the SufE family.

This is an uncharacterized protein from Synechocystis sp. (strain ATCC 27184 / PCC 6803 / Kazusa).